We begin with the raw amino-acid sequence, 746 residues long: Ferrienterobactin receptor (746 aa).

Residues Met1–Ala22 form the signal peptide. Residues Asp34–Ala41 carry the TonB box motif. In terms of domain architecture, TBDR plug spans Glu42–Lys169. Positions Gly76–Ile96 are disordered. Residues Leu79–Gln93 are compositionally biased toward polar residues. A TBDR beta-barrel domain is found at Glu174 to Phe746. The TonB C-terminal box motif lies at Tyr729–Phe746.

Belongs to the TonB-dependent receptor family.

Its subcellular location is the cell outer membrane. In terms of biological role, this protein is involved in the initial step of iron uptake by binding ferrienterobactin (Fe-ENT), an iron chelatin siderophore that allows E.coli to extract iron from the environment. FepA also acts as a receptor for colicins B and D. In Escherichia coli (strain K12), this protein is Ferrienterobactin receptor (fepA).